Reading from the N-terminus, the 274-residue chain is Large ribosomal subunit protein uL2 (274 aa).

Positions Val223–Lys274 are disordered.

Belongs to the universal ribosomal protein uL2 family. Part of the 50S ribosomal subunit. Forms a bridge to the 30S subunit in the 70S ribosome.

One of the primary rRNA binding proteins. Required for association of the 30S and 50S subunits to form the 70S ribosome, for tRNA binding and peptide bond formation. It has been suggested to have peptidyltransferase activity; this is somewhat controversial. Makes several contacts with the 16S rRNA in the 70S ribosome. This Shewanella sp. (strain ANA-3) protein is Large ribosomal subunit protein uL2.